The primary structure comprises 302 residues: Ornithine carbamoyltransferase (302 aa).

Residues 52 to 55 (STRT), Gln-79, Arg-103, and 130 to 133 (HPCQ) each bind carbamoyl phosphate. L-ornithine contacts are provided by residues Asn-161, Asp-221, and 225–226 (SM). Residues 261–262 (CL) and Arg-289 contribute to the carbamoyl phosphate site.

It belongs to the aspartate/ornithine carbamoyltransferase superfamily. OTCase family.

The protein localises to the cytoplasm. The enzyme catalyses carbamoyl phosphate + L-ornithine = L-citrulline + phosphate + H(+). Its pathway is amino-acid biosynthesis; L-arginine biosynthesis; L-arginine from L-ornithine and carbamoyl phosphate: step 1/3. Reversibly catalyzes the transfer of the carbamoyl group from carbamoyl phosphate (CP) to the N(epsilon) atom of ornithine (ORN) to produce L-citrulline. This chain is Ornithine carbamoyltransferase, found in Methanosarcina acetivorans (strain ATCC 35395 / DSM 2834 / JCM 12185 / C2A).